Reading from the N-terminus, the 241-residue chain is Octanoyltransferase (241 aa).

Residues 38 to 227 (AGGPDTLLLL…AVCNALDGAL (190 aa)) enclose the BPL/LPL catalytic domain. Substrate-binding positions include 85-92 (RGGKITWH), 157-159 (AIG), and 170-172 (GFA). The Acyl-thioester intermediate role is filled by C188.

It belongs to the LipB family.

Its subcellular location is the cytoplasm. It catalyses the reaction octanoyl-[ACP] + L-lysyl-[protein] = N(6)-octanoyl-L-lysyl-[protein] + holo-[ACP] + H(+). It functions in the pathway protein modification; protein lipoylation via endogenous pathway; protein N(6)-(lipoyl)lysine from octanoyl-[acyl-carrier-protein]: step 1/2. Catalyzes the transfer of endogenously produced octanoic acid from octanoyl-acyl-carrier-protein onto the lipoyl domains of lipoate-dependent enzymes. Lipoyl-ACP can also act as a substrate although octanoyl-ACP is likely to be the physiological substrate. This is Octanoyltransferase from Mycobacterium ulcerans (strain Agy99).